Here is a 372-residue protein sequence, read N- to C-terminus: uncharacterized protein (372 aa).

In terms of domain architecture, PNPLA spans 38–270 (FFIEGGGTKG…ANNIPLDYLI (233 aa)). The short motif at 42 to 47 (GGGTKG) is the GXGXXG element. Residues 74 to 78 (GTSVG) carry the GXSXG motif. The Nucleophile role is filled by Ser-76. Asp-257 serves as the catalytic Proton acceptor. The DGA/G motif lies at 257–259 (DGG).

Probable lipid hydrolase. This is an uncharacterized protein from Acanthamoeba polyphaga (Amoeba).